Reading from the N-terminus, the 104-residue chain is Phosphoribosyl-ATP pyrophosphatase (104 aa).

The protein belongs to the PRA-PH family.

It is found in the cytoplasm. The catalysed reaction is 1-(5-phospho-beta-D-ribosyl)-ATP + H2O = 1-(5-phospho-beta-D-ribosyl)-5'-AMP + diphosphate + H(+). It participates in amino-acid biosynthesis; L-histidine biosynthesis; L-histidine from 5-phospho-alpha-D-ribose 1-diphosphate: step 2/9. The chain is Phosphoribosyl-ATP pyrophosphatase from Streptococcus thermophilus (strain ATCC BAA-491 / LMD-9).